We begin with the raw amino-acid sequence, 485 residues long: Programmed cell death protein 7 (485 aa).

Residues 1-133 are disordered; it reads MALPPFFGQG…EAPPPPADVL (133 aa). Residues 12 to 48 show a composition bias toward pro residues; it reads PGPPPPQPPPPAPFGCPPPPLPSPAFPPPLPQRPGPF. The span at 49–71 shows a compositional bias: low complexity; that stretch reads PGASAPFLQPPLALQPRASAEAS. 2 stretches are compositionally biased toward pro residues: residues 82–96 and 109–130; these read PVPP…PQCR and PPPP…PPPA. 2 coiled-coil regions span residues 232–335 and 362–411; these read VGEA…AAAR and RSEL…ESKL.

In terms of assembly, interacts with RBM40. Component of the U11/U12 snRNPs that are part of the U12-type spliceosome.

Its subcellular location is the nucleus. In terms of biological role, promotes apoptosis when overexpressed. In Homo sapiens (Human), this protein is Programmed cell death protein 7 (PDCD7).